The sequence spans 243 residues: Venom nerve growth factor (243 aa).

An N-terminal signal peptide occupies residues 1-18; sequence MSMLCYTLIIVFLIGIWA. A propeptide spanning residues 19-125 is cleaved from the precursor; that stretch reads APKSEDNVPL…TLNRNIRAKR (107 aa). Residues 47 to 66 are compositionally biased toward basic and acidic residues; sequence GLKTSRNTDQRHPAPKKAED. A disordered region spans residues 47-69; the sequence is GLKTSRNTDQRHPAPKKAEDQEL. Cystine bridges form between cysteine 139/cysteine 204, cysteine 182/cysteine 232, and cysteine 192/cysteine 234. Residue asparagine 148 is glycosylated (N-linked (GlcNAc...) asparagine).

The protein belongs to the NGF-beta family. In terms of assembly, homodimer; non-covalently linked. Expressed by the venom gland.

The protein localises to the secreted. Functionally, nerve growth factor is important for the development and maintenance of the sympathetic and sensory nervous systems. It stimulates division and differentiation of sympathetic and embryonic sensory neurons as well as basal forebrain cholinergic neurons in the brain. Its relevance in the snake venom is not clear. However, it has been shown to inhibit metalloproteinase-dependent proteolysis of platelet glycoprotein Ib alpha, suggesting a metalloproteinase inhibition to prevent metalloprotease autodigestion and/or protection against prey proteases. Binds a lipid between the two protein chains in the homodimer. The lipid-bound form promotes histamine relase from mouse mast cells, contrary to the lipid-free form. The sequence is that of Venom nerve growth factor from Oxyuranus scutellatus scutellatus (Australian taipan).